We begin with the raw amino-acid sequence, 29 residues long: Conotoxin pr6a (29 aa).

3 disulfide bridges follow: Cys2-Cys20, Cys9-Cys24, and Cys19-Cys28.

As to expression, expressed by the venom duct.

The protein localises to the secreted. Functionally, intraperitoneal injection into fish (1 nmol) provokes hyperactivity and erratic swimming in various directions after 14 minutes. This is Conotoxin pr6a from Conus parius (Cone snail).